The primary structure comprises 135 residues: L-ectoine synthase (135 aa).

This sequence belongs to the ectoine synthase family.

The enzyme catalyses (2S)-4-acetamido-2-aminobutanoate = L-ectoine + H2O. The protein operates within amine and polyamine biosynthesis; ectoine biosynthesis; L-ectoine from L-aspartate 4-semialdehyde: step 3/3. Functionally, catalyzes the circularization of gamma-N-acetyl-alpha,gamma-diaminobutyric acid (ADABA) to ectoine (1,4,5,6-tetrahydro-2-methyl-4-pyrimidine carboxylic acid), which is an excellent osmoprotectant. The protein is L-ectoine synthase of Saccharopolyspora erythraea (strain ATCC 11635 / DSM 40517 / JCM 4748 / NBRC 13426 / NCIMB 8594 / NRRL 2338).